The chain runs to 105 residues: Pyrimidine/purine nucleoside phosphorylase (105 aa).

This sequence belongs to the nucleoside phosphorylase PpnP family.

The catalysed reaction is a purine D-ribonucleoside + phosphate = a purine nucleobase + alpha-D-ribose 1-phosphate. It catalyses the reaction adenosine + phosphate = alpha-D-ribose 1-phosphate + adenine. The enzyme catalyses cytidine + phosphate = cytosine + alpha-D-ribose 1-phosphate. It carries out the reaction guanosine + phosphate = alpha-D-ribose 1-phosphate + guanine. The catalysed reaction is inosine + phosphate = alpha-D-ribose 1-phosphate + hypoxanthine. It catalyses the reaction thymidine + phosphate = 2-deoxy-alpha-D-ribose 1-phosphate + thymine. The enzyme catalyses uridine + phosphate = alpha-D-ribose 1-phosphate + uracil. It carries out the reaction xanthosine + phosphate = alpha-D-ribose 1-phosphate + xanthine. In terms of biological role, catalyzes the phosphorolysis of diverse nucleosides, yielding D-ribose 1-phosphate and the respective free bases. Can use uridine, adenosine, guanosine, cytidine, thymidine, inosine and xanthosine as substrates. Also catalyzes the reverse reactions. The polypeptide is Pyrimidine/purine nucleoside phosphorylase (Wolinella succinogenes (strain ATCC 29543 / DSM 1740 / CCUG 13145 / JCM 31913 / LMG 7466 / NCTC 11488 / FDC 602W) (Vibrio succinogenes)).